A 347-amino-acid chain; its full sequence is Ubiquitin thioesterase Otu1 (347 aa).

In terms of domain architecture, Ubiquitin-like spans 5–87; it reads FSVKLKSKKG…LIVEEKAAPA (83 aa). A UBX-like region spans residues 8–89; the sequence is KLKSKKGQFI…VEEKAAPAPA (82 aa). An OTU domain is found at 150–274; the sequence is LLKKVVPADN…GIHYDPLYME (125 aa). The tract at residues 155 to 161 is cys-loop; the sequence is VPADNSC. Aspartate 158 is an active-site residue. Residue cysteine 161 is the Nucleophile of the active site. The segment at 213-223 is variable-loop; that stretch reads IQKADSWGGAI. The segment at 263 to 267 is his-loop; the sequence is FDGIH. Isoleucine 266 serves as a coordination point for substrate. Histidine 267 is an active-site residue. The interval 290-295 is S2 site; that stretch reads LGVYQQ. The segment at 317–341 adopts a C2H2-type zinc-finger fold; the sequence is LRCMQCDVRLVGQVQAQEHAKQTGH. Residue histidine 341 is part of the active site.

The enzyme catalyses Thiol-dependent hydrolysis of ester, thioester, amide, peptide and isopeptide bonds formed by the C-terminal Gly of ubiquitin (a 76-residue protein attached to proteins as an intracellular targeting signal).. In terms of biological role, hydrolase that can remove conjugated ubiquitin from proteins and may therefore play an important regulatory role at the level of protein turnover by preventing degradation. Involved in the regulation of DNA damage repair. The chain is Ubiquitin thioesterase Otu1 from Drosophila melanogaster (Fruit fly).